The chain runs to 603 residues: D-3-phosphoglycerate dehydrogenase 1, chloroplastic (603 aa).

A chloroplast-targeting transit peptide spans 1-54; that stretch reads MSATAAASSSIAVATNSLRNVTLSSRSPLPSAISVAFPSRGRNTLQRRLVLVSC. NAD(+) contacts are provided by residues 210 to 211, Asp230, 289 to 291, and Asp315; these read KV and VAR. Arg291 is an active-site residue. The active site involves Glu320. His339 (proton donor) is an active-site residue. 339–342 serves as a coordination point for NAD(+); sequence HLGA. In terms of domain architecture, ACT spans 531–603; that stretch reads IILCRQVDQP…AVEEFVFLKL (73 aa).

The protein belongs to the D-isomer specific 2-hydroxyacid dehydrogenase family. In terms of tissue distribution, ubiquitous, but highly expressed in roots. Expressed in vasculature, root and shoot meristems, distal part of cotyledons and leaves, anther, stigma and pollen grains. Detected at the tip of the cotyledons in late embryos.

The protein resides in the plastid. It localises to the chloroplast. The catalysed reaction is (2R)-3-phosphoglycerate + NAD(+) = 3-phosphooxypyruvate + NADH + H(+). The protein operates within amino-acid biosynthesis; L-serine biosynthesis; L-serine from 3-phospho-D-glycerate: step 1/3. With respect to regulation, partially inhibited by 5 mM serine. Involved in the plastidial phosphorylated pathway of serine biosynthesis (PPSB). Required for mature pollen development. The chain is D-3-phosphoglycerate dehydrogenase 1, chloroplastic (PGDH1) from Arabidopsis thaliana (Mouse-ear cress).